A 93-amino-acid polypeptide reads, in one-letter code: YcgL domain-containing protein Shew_2183 (93 aa).

In terms of domain architecture, YcgL spans 1–85 (MICAVYKSRL…PPVNLLEEYK (85 aa)).

The protein is YcgL domain-containing protein Shew_2183 of Shewanella loihica (strain ATCC BAA-1088 / PV-4).